Consider the following 948-residue polypeptide: ATPase 2, plasma membrane-type (948 aa).

Ser2 carries the post-translational modification N-acetylserine. The Cytoplasmic portion of the chain corresponds to Ser2–Phe61. A helical membrane pass occupies residues Leu62 to Ile81. Residues Ala82–Trp93 lie on the Extracellular side of the membrane. A helical transmembrane segment spans residues Gln94–Glu114. Residues Asn115 to Ile243 are Cytoplasmic-facing. A helical transmembrane segment spans residues Gly244–Pro264. Over Ile265 to Gly273 the chain is Extracellular. The chain crosses the membrane as a helical span at residues Ile274–Thr291. Over Val292–Lys643 the chain is Cytoplasmic. The active-site 4-aspartylphosphate intermediate is Asp329. Mg(2+) contacts are provided by Asp588 and Asp592. The chain crosses the membrane as a helical span at residues Asn644–Leu665. Residues Ile666–Asp670 lie on the Extracellular side of the membrane. Residues Phe671 to Asp693 form a helical membrane-spanning segment. The Cytoplasmic portion of the chain corresponds to Arg694–Ile709. The chain crosses the membrane as a helical span at residues Phe710–Ala730. Residues Ala731 to His751 lie on the Extracellular side of the membrane. Residues Glu752 to Thr772 traverse the membrane as a helical segment. Topologically, residues Arg773–Gly784 are cytoplasmic. Residues Ala785–Ala805 form a helical membrane-spanning segment. At Asn806 to Arg813 the chain is on the extracellular side. Residues Gly814 to Leu834 form a helical membrane-spanning segment. The Cytoplasmic portion of the chain corresponds to Asp835–Val948. Thr881 bears the Phosphothreonine mark. Residue Ser899 is modified to Phosphoserine. A Phosphoserine; by CIPK11 modification is found at Ser931. The segment at Tyr946–Val948 is interaction with 14-3-3 proteins. At Thr947 the chain carries Phosphothreonine.

It belongs to the cation transport ATPase (P-type) (TC 3.A.3) family. Type IIIA subfamily. As to quaternary structure, binds to 14-3-3 proteins. The binding is induced by phosphorylation of Thr-947 and it activates the H(+)-ATPase. Interacts (via the R-domain) with PSY1R (via C-terminus). Part of a functional complex containing PSKR1, BAK1, CNGC17, and AHA. Interacts with CNGC17 and PSKR1. Interacts with PP2C67/PP2C-D1 at the plasma membrane. Interacts with AHA1. Phosphorylated, probably by PHOT1 and PHOT2, at C-terminal Thr-947 in guard cells in response to blue light to induce stomatal opening. Post-translationally, phosphorylation at Thr-881 by PSY1R. This phosphorylation activates proton pumping. Decreased phosphorylation in response to flg22 elicitation. In terms of processing, phosphorylation at Ser-899 is specifically induced by RALF1, thus leading to the inhibition of proton transport. Increased phosphorylation in response to flg22 elicitation. Phosphorylation of Thr-947 induces the binding to 14-3-3 proteins, but phosphorylation of Ser-931 interferes with this binding no matter whether Thr-947 is phosphorylated or not. Decreased phosphorylation in response to flg22 elicitation. Phosphorylation of Thr-947 is enhanced by the presence of brassinolide (BL) via the BRI1-BIN2 pathway and prior the trigger of hypocotyl elongation. Inactivated by PP2C67/PP2C-D1-mediated Thr-947 dephosphorylation; SAUR19 inhibits the action of PP2C67/PP2C-D1 and thus promotes the active phosphorylated form. Post-translationally, abscisic acid induces dephosphorylation of AHA2 in etiolated seedlings, suppressing ATP hydrolysis and hypocotyl elongation. In terms of tissue distribution, higher levels in roots than in shoots. Expressed in epidermal and root cortex cells, in phloem, xylem and root hairs. Detected in cotyledons, leaves, hypocotyls, roots and root hairs. Expressed in guard cells and mesophyll cells.

Its subcellular location is the cell membrane. The catalysed reaction is ATP + H2O + H(+)(in) = ADP + phosphate + 2 H(+)(out). Its activity is regulated as follows. Regulated by an auto-inhibitory C-terminal domain that can be displaced by phosphorylation of Thr-947 and the subsequent binding of 14-3-3 proteins. Negatively regulated by PKS5. PKS5 phosphorylates Ser-931, inhibiting interaction with the activating 14-3-3 protein. Positively regulated by PSY1R. PSY1R phosphorylates Thr-881, situated in the auto-inhibitory region I of the C-terminal domain, causing pump activation. Negatively regulated by the secreted peptide RALF. After specific binding to FERONIA, RALF causes phosphorylation at Ser-899, mediating the inhibition of proton transport. Activated by lysophospholipids, without the involvement of phosphorylation of Thr-947. This activation is critically dependent on the single autoinhibitory residue Leu-919. Repressed by PP2C-D phosphatases (e.g. PP2C67/PP2C-D1 and PP2C64/PP2C-D5) which dephosphorylates Thr-947. Triggered by SAUR19 via phosphorylation of the C-terminal autoinhibitory domain (e.g. Thr-947), as a result of the inhibition of PP2C67/PP2C-D1. Phosphorylation on Thr residues is repressed by tyrphostin 9, sphingosine, GW5074 and BML-265. By contrast, the fungal phytotoxin fusicoccin (FC) promotes phosphorylation of Thr-947 independently to BHP, thus leading to large stomatal opening. Its function is as follows. The plasma membrane H(+) ATPase of plants and fungi generates a proton gradient that drives the active transport of nutrients by H(+)-symport. The resulting external acidification and/or internal alkinization may mediate growth responses. Involved in maintaining the membrane potential and delta-pH, together forming the plasma membrane protonmotive force (PMF) required for root and hypocotyl elongation and root tropism. Important for root growth and development during different nitrogen regimes. Forms a functional cation-translocating unit with CNGC17 that is activated by PSKR1/BAK1 and possibly other BAK1/RLK complexes. Promotes stomatal opening in response to blue light. This is ATPase 2, plasma membrane-type from Arabidopsis thaliana (Mouse-ear cress).